The sequence spans 157 residues: MADKKEPKITVAAENRKARFNYAIEDTIEAGIALTGTEVKSIRSGKSTIAESYADSRDGEIWLINANIPEYLQANRFNHEPKRPRKLLLHRKQINKLMGAVEREGMTLIPLKLYFNERGRAKLLLAVAKGKKLHDKRESEKKRDWGREKGRLLRARG.

Positions leucine 133–glycine 157 are disordered. Basic and acidic residues predominate over residues aspartate 135 to arginine 151.

The protein belongs to the SmpB family.

The protein localises to the cytoplasm. Functionally, required for rescue of stalled ribosomes mediated by trans-translation. Binds to transfer-messenger RNA (tmRNA), required for stable association of tmRNA with ribosomes. tmRNA and SmpB together mimic tRNA shape, replacing the anticodon stem-loop with SmpB. tmRNA is encoded by the ssrA gene; the 2 termini fold to resemble tRNA(Ala) and it encodes a 'tag peptide', a short internal open reading frame. During trans-translation Ala-aminoacylated tmRNA acts like a tRNA, entering the A-site of stalled ribosomes, displacing the stalled mRNA. The ribosome then switches to translate the ORF on the tmRNA; the nascent peptide is terminated with the 'tag peptide' encoded by the tmRNA and targeted for degradation. The ribosome is freed to recommence translation, which seems to be the essential function of trans-translation. The polypeptide is SsrA-binding protein (Bradyrhizobium sp. (strain BTAi1 / ATCC BAA-1182)).